Consider the following 445-residue polypeptide: Glutamyl-tRNA reductase (445 aa).

Residues 49-52, serine 109, 114-116, and glutamine 120 contribute to the substrate site; these read TCNR and ETQ. The active-site Nucleophile is the cysteine 50. An NADP(+)-binding site is contributed by 189 to 194; the sequence is GAGEMS.

The protein belongs to the glutamyl-tRNA reductase family. As to quaternary structure, homodimer.

The catalysed reaction is (S)-4-amino-5-oxopentanoate + tRNA(Glu) + NADP(+) = L-glutamyl-tRNA(Glu) + NADPH + H(+). It functions in the pathway porphyrin-containing compound metabolism; protoporphyrin-IX biosynthesis; 5-aminolevulinate from L-glutamyl-tRNA(Glu): step 1/2. In terms of biological role, catalyzes the NADPH-dependent reduction of glutamyl-tRNA(Glu) to glutamate 1-semialdehyde (GSA). This Staphylococcus carnosus (strain TM300) protein is Glutamyl-tRNA reductase.